Here is a 215-residue protein sequence, read N- to C-terminus: 2-phospho-L-lactate guanylyltransferase (215 aa).

This sequence belongs to the CofC family. In terms of assembly, homodimer.

The catalysed reaction is (2S)-2-phospholactate + GTP + H(+) = (2S)-lactyl-2-diphospho-5'-guanosine + diphosphate. It participates in cofactor biosynthesis; coenzyme F420 biosynthesis. Guanylyltransferase that catalyzes the activation of (2S)-2-phospholactate (2-PL) as (2S)-lactyl-2-diphospho-5'-guanosine, via the condensation of 2-PL with GTP. It is involved in the biosynthesis of coenzyme F420, a hydride carrier cofactor. This Methanococcoides burtonii (strain DSM 6242 / NBRC 107633 / OCM 468 / ACE-M) protein is 2-phospho-L-lactate guanylyltransferase.